We begin with the raw amino-acid sequence, 549 residues long: Glucose-6-phosphate isomerase (549 aa).

The Proton donor role is filled by Glu-355. Catalysis depends on residues His-386 and Lys-514.

Belongs to the GPI family.

It localises to the cytoplasm. It carries out the reaction alpha-D-glucose 6-phosphate = beta-D-fructose 6-phosphate. It functions in the pathway carbohydrate biosynthesis; gluconeogenesis. It participates in carbohydrate degradation; glycolysis; D-glyceraldehyde 3-phosphate and glycerone phosphate from D-glucose: step 2/4. Catalyzes the reversible isomerization of glucose-6-phosphate to fructose-6-phosphate. The sequence is that of Glucose-6-phosphate isomerase from Edwardsiella ictaluri (strain 93-146).